Here is a 201-residue protein sequence, read N- to C-terminus: Holliday junction branch migration complex subunit RuvA (201 aa).

Residues 1 to 64 (MIGRLRGELV…EDAHVLYGFA (64 aa)) form a domain I region. A domain II region spans residues 65-143 (SESERALFRS…SLPAAVTLTG (79 aa)). The interval 144-153 (GKPAAAAARA) is flexible linker. A domain III region spans residues 153–201 (APDPVSDAVSALVSLGYKPQEASRLISAVEGEAERSEDLIRLALKATLK).

The protein belongs to the RuvA family. As to quaternary structure, homotetramer. Forms an RuvA(8)-RuvB(12)-Holliday junction (HJ) complex. HJ DNA is sandwiched between 2 RuvA tetramers; dsDNA enters through RuvA and exits via RuvB. An RuvB hexamer assembles on each DNA strand where it exits the tetramer. Each RuvB hexamer is contacted by two RuvA subunits (via domain III) on 2 adjacent RuvB subunits; this complex drives branch migration. In the full resolvosome a probable DNA-RuvA(4)-RuvB(12)-RuvC(2) complex forms which resolves the HJ.

Its subcellular location is the cytoplasm. In terms of biological role, the RuvA-RuvB-RuvC complex processes Holliday junction (HJ) DNA during genetic recombination and DNA repair, while the RuvA-RuvB complex plays an important role in the rescue of blocked DNA replication forks via replication fork reversal (RFR). RuvA specifically binds to HJ cruciform DNA, conferring on it an open structure. The RuvB hexamer acts as an ATP-dependent pump, pulling dsDNA into and through the RuvAB complex. HJ branch migration allows RuvC to scan DNA until it finds its consensus sequence, where it cleaves and resolves the cruciform DNA. The protein is Holliday junction branch migration complex subunit RuvA of Thioalkalivibrio sulfidiphilus (strain HL-EbGR7).